The sequence spans 197 residues: GTP cyclohydrolase-2 (197 aa).

49–53 contributes to the GTP binding site; it reads RVHSE. Zn(2+)-binding residues include cysteine 54, cysteine 65, and cysteine 67. Residues glutamine 70, 92–94, and threonine 114 contribute to the GTP site; that span reads EGR. Aspartate 126 serves as the catalytic Proton acceptor. Residue arginine 128 is the Nucleophile of the active site. Threonine 149 and lysine 154 together coordinate GTP.

The protein belongs to the GTP cyclohydrolase II family. In terms of assembly, homodimer. The cofactor is Zn(2+).

It carries out the reaction GTP + 4 H2O = 2,5-diamino-6-hydroxy-4-(5-phosphoribosylamino)-pyrimidine + formate + 2 phosphate + 3 H(+). It functions in the pathway cofactor biosynthesis; riboflavin biosynthesis; 5-amino-6-(D-ribitylamino)uracil from GTP: step 1/4. Functionally, catalyzes the conversion of GTP to 2,5-diamino-6-ribosylamino-4(3H)-pyrimidinone 5'-phosphate (DARP), formate and pyrophosphate. The protein is GTP cyclohydrolase-2 of Pectobacterium atrosepticum (strain SCRI 1043 / ATCC BAA-672) (Erwinia carotovora subsp. atroseptica).